The primary structure comprises 547 residues: Inactive delta-guaiene synthase (547 aa).

Mg(2+)-binding residues include Asp299, Asp303, and Asp444. Residues 299 to 303 carry the DDXXD motif motif; it reads DDTYD.

Belongs to the terpene synthase family. Mg(2+) serves as cofactor.

This chain is Inactive delta-guaiene synthase (C1), found in Aquilaria crassna (Eagle wood).